A 187-amino-acid chain; its full sequence is dTTP/UTP pyrophosphatase (187 aa).

Asp-64 serves as the catalytic Proton acceptor.

This sequence belongs to the Maf family. YhdE subfamily. A divalent metal cation is required as a cofactor.

It is found in the cytoplasm. The catalysed reaction is dTTP + H2O = dTMP + diphosphate + H(+). It catalyses the reaction UTP + H2O = UMP + diphosphate + H(+). Functionally, nucleoside triphosphate pyrophosphatase that hydrolyzes dTTP and UTP. May have a dual role in cell division arrest and in preventing the incorporation of modified nucleotides into cellular nucleic acids. The chain is dTTP/UTP pyrophosphatase from Leptospira interrogans serogroup Icterohaemorrhagiae serovar Lai (strain 56601).